The primary structure comprises 142 residues: Large ribosomal subunit protein uL13 (142 aa).

This sequence belongs to the universal ribosomal protein uL13 family. In terms of assembly, part of the 50S ribosomal subunit.

Its function is as follows. This protein is one of the early assembly proteins of the 50S ribosomal subunit, although it is not seen to bind rRNA by itself. It is important during the early stages of 50S assembly. The sequence is that of Large ribosomal subunit protein uL13 from Burkholderia mallei (strain NCTC 10247).